The following is a 250-amino-acid chain: Type III pantothenate kinase (250 aa).

6-13 (DVGNTNTV) provides a ligand contact to ATP. 103–106 (GADR) serves as a coordination point for substrate. Aspartate 105 functions as the Proton acceptor in the catalytic mechanism. Residue aspartate 125 coordinates K(+). Residue threonine 128 participates in ATP binding. Threonine 180 is a substrate binding site.

Belongs to the type III pantothenate kinase family. Homodimer. The cofactor is NH4(+). K(+) serves as cofactor.

The protein resides in the cytoplasm. The enzyme catalyses (R)-pantothenate + ATP = (R)-4'-phosphopantothenate + ADP + H(+). It functions in the pathway cofactor biosynthesis; coenzyme A biosynthesis; CoA from (R)-pantothenate: step 1/5. Functionally, catalyzes the phosphorylation of pantothenate (Pan), the first step in CoA biosynthesis. The chain is Type III pantothenate kinase from Frankia alni (strain DSM 45986 / CECT 9034 / ACN14a).